Reading from the N-terminus, the 467-residue chain is MYQRMLRCGAELGSPGGGGGGAGGRLALLWIVPLTLSGLLGVAWGASSLGAHHIHHFHGSSKHHSVPIAIYRSPASLRGGHAGTTYIFSKGGGQITYKWPPNDRPSTRADRLAIGFSTVQKEAVLVRVDSSSGLGDYLELHIHQGKIGVKFNVGTDDIAIEESNAIINDGKYHVVRFTRSGGNATLQVDSWPVIERYPAGNNDNERLAIARQRIPYRLGRVVDEWLLDKGRQLTIFNSQATIIIGGKEQGQPFQGQLSGLYYNGLKVLNMAAENDANIAIVGNVRLVGEVPSSMTTESTATAMQSEMSTSIMETTTTLATSTARRGNSPTKEPVSQTTDDILVASAECPSDDEDIDPCEPSSGGLANPTRAGGREPYPGSAEVIRESSSTTGMVVGIVAAAALCILILLYAMYKYRNRDEGSYHVDESRNYISNSAQSNGAVVKEKQPSSAKSANKNKKNKDKEYYV.

The N-terminal stretch at 1–45 (MYQRMLRCGAELGSPGGGGGGAGGRLALLWIVPLTLSGLLGVAWG) is a signal peptide. Residues 46-391 (ASSLGAHHIH…EVIRESSSTT (346 aa)) lie on the Extracellular side of the membrane. In terms of domain architecture, Laminin G-like spans 86–284 (YIFSKGGGQI…DANIAIVGNV (199 aa)). Asp136 and Val153 together coordinate Ca(2+). An N-linked (GlcNAc...) asparagine glycan is attached at Asn183. The segment at 200–229 (GNNDNERLAIARQRIPYRLGRVVDEWLLDK) is essential for interaction with CBLN1; modulates interaction affinity with NLGN1, NLGN2 and NLGN3; prevents interaction with DAG1/alpha-dystroglycan; modulates interaction with alpha-latrotoxin. Ca(2+)-binding residues include Ile235 and Asn237. The segment at 318-380 (LATSTARRGN…AGGREPYPGS (63 aa)) is disordered. Polar residues predominate over residues 324–339 (RRGNSPTKEPVSQTTD). A glycan (O-linked (Xyl...) (heparan sulfate) serine) is linked at Ser345. A helical membrane pass occupies residues 392-412 (GMVVGIVAAAALCILILLYAM). Residues 413 to 467 (YKYRNRDEGSYHVDESRNYISNSAQSNGAVVKEKQPSSAKSANKNKKNKDKEYYV) lie on the Cytoplasmic side of the membrane. Positions 434-467 (NSAQSNGAVVKEKQPSSAKSANKNKKNKDKEYYV) are disordered. Phosphoserine occurs at positions 449, 450, and 453.

Belongs to the neurexin family. The cytoplasmic C-terminal region binds to CASK. Binds NLGN1, NLGN2 and NLGN3, DAG1 (alpha-dystroglycan) and alpha-latrotoxin. Binding to neuroligins is calcium-dependent, and the binding preference ranks as follow: NLGN1 &gt; NLGN4 &gt;&gt; NLGN3 &gt; NLGN2. Interacts with CBLN2 and more weakly with CBLN4. Interacts with CBLN1; interaction is CBLN1 hexamer form-dependent; CBLN1-binding is calcium-independent; isoform 1b does not interact with CBLN1. Interacts with CLSTN3. O-glycosylated; contains heparan sulfate. Heparan sulfate attachment is required for synapse development by mediating interactions with neuroligins.

The protein localises to the presynaptic cell membrane. In terms of biological role, neuronal cell surface protein involved in cell recognition and cell adhesion by forming intracellular junctions through binding to neuroligins. Plays a role in formation of synaptic junctions. Functions as part of a trans-synaptic complex by binding to cerebellins and postsynaptic GRID1. This interaction helps regulate the activity of NMDA and AMPA receptors at hippocampal synapses without affecting synapse formation. NRXN1B-CBLN2-GRID1 complex transduce presynaptic signals into postsynaptic NMDAR response. This is Neurexin-1-beta from Bos taurus (Bovine).